A 283-amino-acid chain; its full sequence is Phosphate import ATP-binding protein PstB (283 aa).

The span at 1–20 shows a compositional bias: polar residues; it reads MAQTLAQTKQISQSHTFDVS. The interval 1–33 is disordered; it reads MAQTLAQTKQISQSHTFDVSQSHHKTPNDTNSH. One can recognise an ABC transporter domain in the interval 37–278; that stretch reads YSTQNLDLWY…PSNKKTEDYI (242 aa). ATP is bound at residue 69 to 76; the sequence is GPSGCGKS.

Belongs to the ABC transporter superfamily. Phosphate importer (TC 3.A.1.7) family. As to quaternary structure, the complex is composed of two ATP-binding proteins (PstB), two transmembrane proteins (PstC and PstA) and a solute-binding protein (PstS).

The protein resides in the cell membrane. The enzyme catalyses phosphate(out) + ATP + H2O = ADP + 2 phosphate(in) + H(+). In terms of biological role, part of the ABC transporter complex PstSACB involved in phosphate import. Responsible for energy coupling to the transport system. The chain is Phosphate import ATP-binding protein PstB from Staphylococcus aureus (strain bovine RF122 / ET3-1).